A 587-amino-acid polypeptide reads, in one-letter code: Phosphomethylpyrimidine synthase (587 aa).

Residues 1 to 58 (MTPTQNEIHPKHSYSPIRKDGLEVPETEIRLDDSPSGPNEPFRIYRTRGPETNPKQGL) form a disordered region. Residues 17 to 33 (IRKDGLEVPETEIRLDD) are compositionally biased toward basic and acidic residues. Substrate is bound by residues asparagine 180, methionine 209, tyrosine 238, histidine 274, 294 to 296 (SRG), 335 to 338 (DGLR), and glutamate 374. Zn(2+) is bound at residue histidine 378. A substrate-binding site is contributed by tyrosine 401. Histidine 442 is a binding site for Zn(2+). [4Fe-4S] cluster is bound by residues cysteine 522, cysteine 525, and cysteine 530.

The protein belongs to the ThiC family. Requires [4Fe-4S] cluster as cofactor.

The enzyme catalyses 5-amino-1-(5-phospho-beta-D-ribosyl)imidazole + S-adenosyl-L-methionine = 4-amino-2-methyl-5-(phosphooxymethyl)pyrimidine + CO + 5'-deoxyadenosine + formate + L-methionine + 3 H(+). It participates in cofactor biosynthesis; thiamine diphosphate biosynthesis. Catalyzes the synthesis of the hydroxymethylpyrimidine phosphate (HMP-P) moiety of thiamine from aminoimidazole ribotide (AIR) in a radical S-adenosyl-L-methionine (SAM)-dependent reaction. This is Phosphomethylpyrimidine synthase from Corynebacterium glutamicum (strain ATCC 13032 / DSM 20300 / JCM 1318 / BCRC 11384 / CCUG 27702 / LMG 3730 / NBRC 12168 / NCIMB 10025 / NRRL B-2784 / 534).